A 373-amino-acid chain; its full sequence is Probable di-N-acetylchitobiase 1 (373 aa).

Positions 1–20 are cleaved as a signal peptide; sequence MKIFIIISLILTILIIQSKS. Residues 21-369 form the GH18 domain; it reads KECPCSNVEL…SGMWGALNSF (349 aa). Residue asparagine 48 is glycosylated (N-linked (GlcNAc...) asparagine). Chitin-binding positions include 53 to 54 and 82 to 85; these read PY and NGVR. A glycan (N-linked (GlcNAc...) asparagine) is linked at asparagine 99. The active-site Proton donor is glutamate 127. Residues tyrosine 128 and 191-194 contribute to the chitin site; that span reads MDYD. N-linked (GlcNAc...) asparagine glycosylation is found at asparagine 222, asparagine 250, asparagine 269, asparagine 279, and asparagine 288. Residue tryptophan 347 coordinates chitin.

This sequence belongs to the glycosyl hydrolase 18 family.

Its subcellular location is the lysosome. Involved in the degradation of asparagine-linked glycoproteins. May hydrolyze of N-acetyl-beta-D-glucosamine (1-4)N-acetylglucosamine chitobiose core from the reducing end of the bond. The sequence is that of Probable di-N-acetylchitobiase 1 (ctbs1) from Dictyostelium discoideum (Social amoeba).